A 241-amino-acid chain; its full sequence is Triosephosphate isomerase (241 aa).

Residue 9-11 (NWK) participates in substrate binding. The active-site Electrophile is the histidine 96. Glutamate 165 (proton acceptor) is an active-site residue. Residues glycine 171, serine 204, and 225–226 (GG) contribute to the substrate site.

This sequence belongs to the triosephosphate isomerase family. Homodimer.

Its subcellular location is the cytoplasm. The catalysed reaction is D-glyceraldehyde 3-phosphate = dihydroxyacetone phosphate. It participates in carbohydrate biosynthesis; gluconeogenesis. Its pathway is carbohydrate degradation; glycolysis; D-glyceraldehyde 3-phosphate from glycerone phosphate: step 1/1. Involved in the gluconeogenesis. Catalyzes stereospecifically the conversion of dihydroxyacetone phosphate (DHAP) to D-glyceraldehyde-3-phosphate (G3P). The polypeptide is Triosephosphate isomerase (Prochlorococcus marinus (strain MIT 9301)).